A 230-amino-acid chain; its full sequence is Cytochrome c oxidase subunit 2 (230 aa).

Over 1–14 (MAHPSQLGFQDAAS) the chain is Mitochondrial intermembrane. The chain crosses the membrane as a helical span at residues 15–45 (PVMEELLHFHDHALMIVFLISTLVLYIIVAM). Residues 46–59 (VSTKLTNKYILDSQ) are Mitochondrial matrix-facing. The chain crosses the membrane as a helical span at residues 60-87 (EIEIIWTVLPAVILILIALPSLRILYLM). At 88 to 230 (DEINDPHLTI…SWSSLMLEDA (143 aa)) the chain is on the mitochondrial intermembrane side. Residues His161, Cys196, Glu198, Cys200, His204, and Met207 each contribute to the Cu cation site. Residue Glu198 participates in Mg(2+) binding.

It belongs to the cytochrome c oxidase subunit 2 family. As to quaternary structure, component of the cytochrome c oxidase (complex IV, CIV), a multisubunit enzyme composed of 14 subunits. The complex is composed of a catalytic core of 3 subunits MT-CO1, MT-CO2 and MT-CO3, encoded in the mitochondrial DNA, and 11 supernumerary subunits COX4I, COX5A, COX5B, COX6A, COX6B, COX6C, COX7A, COX7B, COX7C, COX8 and NDUFA4, which are encoded in the nuclear genome. The complex exists as a monomer or a dimer and forms supercomplexes (SCs) in the inner mitochondrial membrane with NADH-ubiquinone oxidoreductase (complex I, CI) and ubiquinol-cytochrome c oxidoreductase (cytochrome b-c1 complex, complex III, CIII), resulting in different assemblies (supercomplex SCI(1)III(2)IV(1) and megacomplex MCI(2)III(2)IV(2)). Found in a complex with TMEM177, COA6, COX18, COX20, SCO1 and SCO2. Interacts with TMEM177 in a COX20-dependent manner. Interacts with COX20. Interacts with COX16. Cu cation is required as a cofactor.

The protein localises to the mitochondrion inner membrane. It carries out the reaction 4 Fe(II)-[cytochrome c] + O2 + 8 H(+)(in) = 4 Fe(III)-[cytochrome c] + 2 H2O + 4 H(+)(out). In terms of biological role, component of the cytochrome c oxidase, the last enzyme in the mitochondrial electron transport chain which drives oxidative phosphorylation. The respiratory chain contains 3 multisubunit complexes succinate dehydrogenase (complex II, CII), ubiquinol-cytochrome c oxidoreductase (cytochrome b-c1 complex, complex III, CIII) and cytochrome c oxidase (complex IV, CIV), that cooperate to transfer electrons derived from NADH and succinate to molecular oxygen, creating an electrochemical gradient over the inner membrane that drives transmembrane transport and the ATP synthase. Cytochrome c oxidase is the component of the respiratory chain that catalyzes the reduction of oxygen to water. Electrons originating from reduced cytochrome c in the intermembrane space (IMS) are transferred via the dinuclear copper A center (CU(A)) of subunit 2 and heme A of subunit 1 to the active site in subunit 1, a binuclear center (BNC) formed by heme A3 and copper B (CU(B)). The BNC reduces molecular oxygen to 2 water molecules using 4 electrons from cytochrome c in the IMS and 4 protons from the mitochondrial matrix. The protein is Cytochrome c oxidase subunit 2 (mt-co2) of Gadus morhua (Atlantic cod).